Reading from the N-terminus, the 256-residue chain is Enolase-phosphatase E1 (256 aa).

Mg(2+) contacts are provided by aspartate 13 and glutamate 15. Substrate contacts are provided by residues 127 to 128 and lysine 175; that span reads SS. Aspartate 202 provides a ligand contact to Mg(2+).

Belongs to the HAD-like hydrolase superfamily. MasA/MtnC family. As to quaternary structure, monomer. It depends on Mg(2+) as a cofactor.

The protein localises to the cytoplasm. The protein resides in the nucleus. It carries out the reaction 5-methylsulfanyl-2,3-dioxopentyl phosphate + H2O = 1,2-dihydroxy-5-(methylsulfanyl)pent-1-en-3-one + phosphate. The protein operates within amino-acid biosynthesis; L-methionine biosynthesis via salvage pathway; L-methionine from S-methyl-5-thio-alpha-D-ribose 1-phosphate: step 3/6. It participates in amino-acid biosynthesis; L-methionine biosynthesis via salvage pathway; L-methionine from S-methyl-5-thio-alpha-D-ribose 1-phosphate: step 4/6. Functionally, bifunctional enzyme that catalyzes the enolization of 2,3-diketo-5-methylthiopentyl-1-phosphate (DK-MTP-1-P) into the intermediate 2-hydroxy-3-keto-5-methylthiopentenyl-1-phosphate (HK-MTPenyl-1-P), which is then dephosphorylated to form the acireductone 1,2-dihydroxy-3-keto-5-methylthiopentene (DHK-MTPene). The protein is Enolase-phosphatase E1 (utr4) of Botryotinia fuckeliana (strain B05.10) (Noble rot fungus).